The chain runs to 179 residues: Hypoxanthine-guanine phosphoribosyltransferase (179 aa).

2 residues coordinate diphosphate: K42 and G43. Mg(2+) is bound by residues E98 and D99. E102 functions as the Proton acceptor in the catalytic mechanism. GMP contacts are provided by residues K130, 151–152, and D158; that span reads FV. R164 is a binding site for diphosphate.

The protein belongs to the purine/pyrimidine phosphoribosyltransferase family. Mg(2+) is required as a cofactor.

The protein resides in the cytoplasm. The enzyme catalyses IMP + diphosphate = hypoxanthine + 5-phospho-alpha-D-ribose 1-diphosphate. The catalysed reaction is GMP + diphosphate = guanine + 5-phospho-alpha-D-ribose 1-diphosphate. Its pathway is purine metabolism; IMP biosynthesis via salvage pathway; IMP from hypoxanthine: step 1/1. It participates in purine metabolism; GMP biosynthesis via salvage pathway; GMP from guanine: step 1/1. Functionally, purine salvage pathway enzyme that catalyzes the transfer of the ribosyl-5-phosphate group from 5-phospho-alpha-D-ribose 1-diphosphate (PRPP) to the N9 position of the 6-oxopurines hypoxanthine and guanine to form the corresponding ribonucleotides IMP (inosine 5'-monophosphate) and GMP (guanosine 5'-monophosphate), with the release of PPi. The protein is Hypoxanthine-guanine phosphoribosyltransferase (hpt) of Staphylococcus epidermidis (strain ATCC 35984 / DSM 28319 / BCRC 17069 / CCUG 31568 / BM 3577 / RP62A).